We begin with the raw amino-acid sequence, 533 residues long: Beta-apo-4'-carotenal oxygenase (533 aa).

Residues Glu226 and Cys260 contribute to the active site.

This sequence belongs to the aldehyde dehydrogenase family.

The catalysed reaction is 4'-apo-beta-carotenal + NAD(+) + H2O = neurosporaxanthin + NADH + 2 H(+). Its function is as follows. Beta-apo-4'-carotenal oxygenase involved in the last step of synthesis of neurosporaxanthin, a carboxylic apocarotenoid acting as an essential protective pigment and leading to orange pigmentation. Converts the aldehyde beta-apo-4'-carotenal into neurosporaxanthin. Neurosporaxanthin is synthesized from geranyl-geranyl pyrophosphate (GGPP) through several enzymatic activities. Phytoene synthase activity performed by the bifunctional enzyme al-2 first produces phytoene from geranyl-geranyl pyrophosphate (GGPP). The phytoene dehydrogenase al-1 then introduces 5 desaturations to lead to 3,4-didehydrolycopene via the intermediates phytofluene, zeta-carotene, neurosporene and lycopene. Al-2 cyclase activity then converts 3,4-didehydrolycopene into torulene. Al-2 can also convet lycopene into gamma-carotene which in turn is converted to beta-carotene by an additional al-2 cyclization reaction. Torulene is the substrate of the dioxidase cao-2 that breaks the molecule, removing five carbon atoms to yield beta-apo-4'-carotenal, whereas the aldehyde dehydrogenase ylo-1 mediates the last step by converting beta-apo-4'-carotenal into neurosporaxanthin. This Neurospora crassa (strain ATCC 24698 / 74-OR23-1A / CBS 708.71 / DSM 1257 / FGSC 987) protein is Beta-apo-4'-carotenal oxygenase.